The primary structure comprises 510 residues: MAKPILLSISLCLVALVNGCLAQSGGRQQPRFGECKLKRLVALEPSNRIEAEAGVIESWDPNNQQFQCAGVAVVRRTIEPNGLLLPQYSNAPQLLYIVKGRGITGVLFPGCPETFEESQQGQSRIRPSLRSASFQRDRHQKIRHFREGDVIAFPAGVAHWCYNDGDTPVVAVALMDTTNNANQLDQNPRNFYLAGNPDDEFRPQGQQEYEQHRRQQQHQQRHGEPGQQQRGSGNNVFSGFDADFLADAFNVDTETARRLQSENDHRRSIVRVEGRQLQVIRPRWSREEQEREERKERERERESESERRQSRRGGRDDNGLEETICTLRLRENIGDPSRADIYTEEAGRISTANSHTLPVLRWLQLSAERGALYSDALYVPHWNLNAHSVVYALRGRAEVQVVDNFGQTVFDDELREGQLLTIPQNFAVVKRARNEGFEWVSFKTNENAMVSPLAGRTSAIRALPEEVLANALQIPREDARRLKFNRQESTLVRSRPSSSRSSRSERRAEV.

The signal sequence occupies residues 1-23; that stretch reads MAKPILLSISLCLVALVNGCLAQ. 2 disulfides stabilise this stretch: Cys-35–Cys-68 and Cys-111–Cys-325. Residues 38 to 257 enclose the Cupin type-1 1 domain; the sequence is KRLVALEPSN…AFNVDTETAR (220 aa). Disordered regions lie at residues 194–239 and 284–319; these read AGNP…VFSG and WSREEQEREERKERERERESESERRQSRRGGRDDNG. The segment covering 284-318 has biased composition (basic and acidic residues); it reads WSREEQEREERKERERERESESERRQSRRGGRDDN. The NGXEET; peptidase recognition motif signature appears at 318–323; it reads NGLEET. Residues 331–480 form the Cupin type-1 2 domain; the sequence is ENIGDPSRAD…ALQIPREDAR (150 aa). The segment at 487 to 510 is disordered; it reads QESTLVRSRPSSSRSSRSERRAEV.

Belongs to the 11S seed storage protein (globulins) family. In terms of assembly, homohexamer. Can assemble in other multimeric configurations. Proteolytically processed from a single precursor to produce an acidic and a basic chain that are linked by a disulfide bond. Expressed in endosperm of the seed.

Seed storage protein. The protein is 11S globulin of Juglans nigra (Black walnut).